The chain runs to 658 residues: Carnitine O-palmitoyltransferase 2, mitochondrial (658 aa).

The transit peptide at 1 to 25 (MMPRLLFRAWPRCPSLVLGAPSRPL) directs the protein to the mitochondrion. Topologically, residues 26–178 (SAVSGPDDYL…GLLEPEVFHL (153 aa)) are mitochondrial matrix. N6-succinyllysine is present on residues K69 and K85. The note=Mitochondrial inner membrane intramembrane region spans 179–208 (NPSKSDTDAFKRLIRFVPPSLSWYGAYLVN). The Mitochondrial matrix portion of the chain corresponds to 209-658 (AYPLDMSQYF…DALEGKAIKT (450 aa)). K239 is subject to N6-acetyllysine; alternate. The residue at position 239 (K239) is an N6-succinyllysine; alternate. K305 is modified (N6-acetyllysine). H372 functions as the Proton acceptor in the catalytic mechanism. N6-succinyllysine occurs at positions 424 and 439. 452–464 (GKEFLKKKQLSPD) lines the CoA pocket. 3 residues coordinate (R)-carnitine: Y486, S488, and T499. K510 and K544 each carry N6-acetyllysine; alternate. K510 and K544 each carry N6-succinyllysine; alternate.

This sequence belongs to the carnitine/choline acetyltransferase family.

It is found in the mitochondrion inner membrane. It catalyses the reaction (R)-carnitine + hexadecanoyl-CoA = O-hexadecanoyl-(R)-carnitine + CoA. The catalysed reaction is octanoyl-CoA + (R)-carnitine = O-octanoyl-(R)-carnitine + CoA. The enzyme catalyses decanoyl-CoA + (R)-carnitine = O-decanoyl-(R)-carnitine + CoA. It carries out the reaction dodecanoyl-CoA + (R)-carnitine = O-dodecanoyl-R-carnitine + CoA. It catalyses the reaction tetradecanoyl-CoA + (R)-carnitine = O-tetradecanoyl-(R)-carnitine + CoA. The catalysed reaction is (R)-carnitine + octadecanoyl-CoA = O-octadecanoyl-(R)-carnitine + CoA. The enzyme catalyses eicosanoyl-CoA + (R)-carnitine = O-eicosanoyl-(R)-carnitine + CoA. It carries out the reaction (9Z)-tetradecenoyl-CoA + (R)-carnitine = O-(9Z)-tetradecenoyl-(R)-carnitine + CoA. It catalyses the reaction (5Z)-tetradecenoyl-CoA + (R)-carnitine = O-(5Z)-tetradecenoyl-(R)-carnitine + CoA. The catalysed reaction is (R)-carnitine + (9Z)-octadecenoyl-CoA = O-(9Z)-octadecenoyl-(R)-carnitine + CoA. The enzyme catalyses 4,8-dimethylnonanoyl-CoA + (R)-carnitine = O-4,8-dimethylnonanoyl-(R)-carnitine + CoA. Its pathway is lipid metabolism; fatty acid beta-oxidation. Functionally, involved in the intramitochondrial synthesis of acylcarnitines from accumulated acyl-CoA metabolites. Reconverts acylcarnitines back into the respective acyl-CoA esters that can then undergo beta-oxidation, an essential step for the mitochondrial uptake of long-chain fatty acids and their subsequent beta-oxidation in the mitochondrion. Active with medium (C8-C12) and long-chain (C14-C18) acyl-CoA esters. The polypeptide is Carnitine O-palmitoyltransferase 2, mitochondrial (Rattus norvegicus (Rat)).